The sequence spans 550 residues: Transcription factor 7-like 1-C (550 aa).

The segment covering 1-11 (MPQLNSGGGDE) has biased composition (gly residues). An interaction with CTNNB1-A region spans residues 1–60 (MPQLNSGGGDELGANDELIRFKDEGEQEEKSPGEGSAEDLADVKSSLVNESENHSSDSDS). Disordered regions lie at residues 1–76 (MPQL…EKPR), 182–206 (GTPP…HPSE), and 390–473 (WSAR…SLTT). Composition is skewed to basic and acidic residues over residues 17 to 32 (ELIR…EKSP) and 51 to 76 (SENH…EKPR). The segment at 108 to 311 (LGGITCPMVP…SPNLSRKSNV (204 aa)) is interaction with AES and TLE4-A. The HMG box DNA-binding region spans 323–391 (IKKPLNAFML…LHSQLYPSWS (69 aa)). The span at 406-415 (KQSPEMENYT) shows a compositional bias: basic and acidic residues. The segment at 407 to 550 (QSPEMENYTK…PLSLVTRSSD (144 aa)) is interaction with CTBP-B. Residues 444–463 (SPATPSAALASPAAPAATHS) show a composition bias toward low complexity. Residues 464–473 (EQAQPLSLTT) are compositionally biased toward polar residues.

Belongs to the TCF/LEF family. Interacts with csnk1e, ctnnb1-A, ctbp-B, dact1-A and gsk3b. May interact with ase and tle4-A. Post-translationally, phosphorylated. Phosphorylation by csnk1e promotes binding to ctnnb1-A while phosphorylation by gsk3b may reverse this effect.

Its subcellular location is the nucleus. Participates in the Wnt signaling pathway. Binds to DNA and acts as a repressor in the absence of ctnnb1-A and possibly ctnnb1-B, and as an activator in the presence of these proteins. Required early in development for the establishment of the dorsal body axis in response to maternal Wnt signaling. This chain is Transcription factor 7-like 1-C (tcf7l1-c), found in Xenopus laevis (African clawed frog).